Reading from the N-terminus, the 499-residue chain is Multiphosphoryl transfer protein (499 aa).

The 141-residue stretch at 2 to 142 folds into the PTS EIIA type-2 domain; that stretch reads LELSESNIHL…AEFCAILMGE (141 aa). The Tele-phosphohistidine intermediate; for EIIA activity role is filled by histidine 62. Histidine 62 carries the phosphohistidine; by HPr modification. The tract at residues 155–285 is m domain; sequence SLDVNTQSLL…SDVETQSVEG (131 aa). The HPr 1 domain maps to 286–376; it reads AVVGTFTIRN…KAIANGLGEN (91 aa). Catalysis depends on histidine 300, which acts as the Pros-phosphohistidine intermediate; for HPr 1 activity. Histidine 300 is subject to Phosphohistidine. Positions 378-409 are linker; that stretch reads SAVPPSEPDTIEIMGDQIHTPAVTEDDNLPAN. The region spanning 410–499 is the HPr 2 domain; that stretch reads AIEAVFVIKN…GAVIESGLGE (90 aa). Histidine 424 is modified (phosphohistidine). The Pros-phosphohistidine intermediate; for HPr 2 activity role is filled by histidine 424.

The protein localises to the cytoplasm. Its function is as follows. The phosphoenolpyruvate-dependent sugar phosphotransferase system (sugar PTS), a major carbohydrate active transport system, catalyzes the phosphorylation of incoming sugar substrates concomitantly with their translocation across the cell membrane. The enzyme II FruAB PTS system is involved in fructose transport. This is Multiphosphoryl transfer protein (fruB) from Haemophilus influenzae (strain ATCC 51907 / DSM 11121 / KW20 / Rd).